Consider the following 265-residue polypeptide: ATP synthase subunit a (265 aa).

6 consecutive transmembrane segments (helical) span residues 26 to 46 (VHLD…FFFY), 88 to 108 (IGSL…IDLI), 132 to 152 (DISA…FYTI), 168 to 188 (PFNH…TLLA), 195 to 217 (FRLF…MYMA), and 231 to 251 (LIWA…FMML).

This sequence belongs to the ATPase A chain family. F-type ATPases have 2 components, CF(1) - the catalytic core - and CF(0) - the membrane proton channel. CF(1) has five subunits: alpha(3), beta(3), gamma(1), delta(1), epsilon(1). CF(0) has three main subunits: a(1), b(2) and c(9-12). The alpha and beta chains form an alternating ring which encloses part of the gamma chain. CF(1) is attached to CF(0) by a central stalk formed by the gamma and epsilon chains, while a peripheral stalk is formed by the delta and b chains.

Its subcellular location is the cell inner membrane. Its function is as follows. Key component of the proton channel; it plays a direct role in the translocation of protons across the membrane. The protein is ATP synthase subunit a of Histophilus somni (strain 129Pt) (Haemophilus somnus).